A 1140-amino-acid chain; its full sequence is Envelopment polyprotein (1140 aa).

The signal sequence occupies residues 1-17 (MVGWVCISLVVLATTTA). At 18–489 (GLTRNLYELK…VPGLHGWATT (472 aa)) the chain is on the lumenal side. 6 disulfides stabilise this stretch: C30/C155, C64/C161, C113/C132, C137/C142, C179/C189, and C214/C251. N-linked (GlcNAc...) asparagine; by host glycosylation occurs at N138. Residue N351 is glycosylated (N-linked (GlcNAc...) asparagine; by host). Intrachain disulfides connect C380–C439, C384–C393, C409–C428, and C456–C479. An N-linked (GlcNAc...) asparagine; by host glycan is attached at N403. A helical membrane pass occupies residues 490 to 510 (ALLITFCFGWLLIPTITMIIL). Residues 511-631 (KILRLLTFSC…LGVFRYKSRC (121 aa)) are Cytoplasmic-facing. Residues 520-537 (CSHYSTESKFKAILERVK) are binding to the ribonucleoprotein. 2 consecutive CCHC-type zinc fingers follow at residues 549–569 (CDVC…KKSC) and 574–595 (CPYC…FSIC). Binding to the ribonucleoprotein stretches follow at residues 592–609 (FSIC…KKSL), 596–607 (KLTNRFQENLKK), and 615–629 (KQGC…RYKS). The segment at 611–638 (RPEVKQGCYRTLGVFRYKSRCYVGLVWG) is interaction with host TRAF3. The 24-residue stretch at 615–638 (KQGCYRTLGVFRYKSRCYVGLVWG) folds into the ITAM domain. Residues Y619 and Y632 each carry the phosphotyrosine; by host modification. The YxxL signature appears at 619 to 622 (YRTL). The helical transmembrane segment at 632–652 (YVGLVWGVLLTTELIVWAASA) threads the bilayer. Residues 653 to 1108 (DTPLMESGWS…EWLLGILNGN (456 aa)) are Lumenal-facing. Intrachain disulfides connect C739–C774, C743–C781, C755–C888, C769–C899, C784–C907, C810–C819, C827–C836, and C867–C871. Residues 761–781 (YQYETSWGCNPPDCPGVGTGC) are fusion loop. An N-linked (GlcNAc...) asparagine; by host glycan is attached at N931. 5 cysteine pairs are disulfide-bonded: C973-C1003, C996-C1048, C1013-C1018, C1049-C1054, and C1088-C1092. Residues 1109–1129 (WVVVAVLIVILILSILLFSFF) form a helical membrane-spanning segment. The segment at 1125-1140 (LFSFFCPIRGRKNKSN) is binding to the ribonucleoprotein. The Cytoplasmic segment spans residues 1130–1140 (CPIRGRKNKSN).

The protein belongs to the hantavirus envelope glycoprotein family. In terms of assembly, homodimer. Homotetramer; forms heterotetrameric Gn-Gc spikes in the pre-fusion conformation. Interacts (via C-terminus) with the nucleoprotein. Interacts with host TUFM; this interaction contributes to the virus-induced degradation of mitochondria by autophagy, which leads to degradation of host MAVS and inhibition of type I interferon (IFN) responses. Interacts with host MAP1LC3B; this interaction contributes to the virus-induced degradation of mitochondria by autophagy, which leads to degradation of host MAVS and inhibition of type I interferon (IFN) responses. Interacts (via C-terminus) with host TRAF3 (via N-terminus); this interaction inhibits the formation of TRAF3-TBK1 complexes. As to quaternary structure, homodimer. Homotetramer; forms heterotetrameric Gn-Gc spikes in the pre-fusion conformation. Homotrimer; forms homotrimer in the post-fusion conformation at acidic pH. Interacts (via C-terminus) with the nucleoprotein. Envelope polyprotein precursor is quickly cleaved in vivo just after synthesis, presumably by host signal peptidase.

It localises to the virion membrane. Its subcellular location is the host cell surface. The protein resides in the host Golgi apparatus membrane. It is found in the host endoplasmic reticulum membrane. The protein localises to the host mitochondrion. In terms of biological role, forms homotetramers with glycoprotein C at the surface of the virion. Attaches the virion to host cell receptors including integrin ITGAV/ITGB3. This attachment induces virion internalization predominantly through clathrin-dependent endocytosis. Mediates the assembly and budding of infectious virus particles through its interaction with the nucleocapsid protein and the viral genome. May dysregulate normal immune and endothelial cell responses through an ITAM motif. Translocates to mitochondria, binds to host TUFM and recruits MAP1LC3B. These interactions induce mitochondrial autophagy and therefore destruction of host MAVS leading to inhibition of type I interferon (IFN) responses. Concomitant breakdown of glycoprotein N is apparently prevented by the nucleoprotein that may inhibit Gn-stimulated autophagosome-lysosome fusion. Interacts with the viral genomic RNA. Inhibits the host RIG-I/TBK1 pathway by disrupting the formation of TBK1-TRAF3 complexes and downstream signaling responses required for IFN-beta transcription. Functionally, forms homotetramers with glycoprotein N at the surface of the virion. Attaches the virion to host cell receptors including integrin ITGAV/ITGB3. This attachment induces virion internalization predominantly through clathrin-dependent endocytosis. Class II fusion protein that promotes fusion of viral membrane with host endosomal membrane after endocytosis of the virion. The sequence is that of Envelopment polyprotein (GP) from Homo sapiens (Human).